Reading from the N-terminus, the 399-residue chain is RNA-binding protein cabeza (399 aa).

Over residues 1–12 (MERGGYGGGSGQ) the composition is skewed to gly residues. Residues 1–82 (MERGGYGGGS…RGGNSYGNGG (82 aa)) are disordered. The segment covering 24-34 (YQQMPNKTGNY) has biased composition (polar residues). Over residues 43–69 (KQGGGYDSGSGHRGSGGSGNGGGGGGS) the composition is skewed to gly residues. Positions 120–206 (DTIFVSGMDP…NAIKVSLAQR (87 aa)) constitute an RRM domain. 2 disordered regions span residues 209-276 (NWNK…QPRD) and 300-399 (TPKG…SRPY). The segment covering 212–271 (KGGGGGGGGGGRGGFGGRRGGGGGGGGGGGGGGRFDRGGGGGGGRYDRGGGGGGGGGGGN) has biased composition (gly residues). Residues 275–304 (RDGDWKCNSCNNTNFAWRNECNRCKTPKGD) form a RanBP2-type zinc finger. 3 stretches are compositionally biased toward gly residues: residues 308–339 (SSGG…GGGY), 347–361 (NSQG…GGGY), and 368–380 (NGGG…GGGG). Positions 387 to 399 (PMRNDGGMRSRPY) are enriched in low complexity.

The protein belongs to the RRM TET family. As to expression, ubiquitous. Enriched in the brain and central nervous system during embryogenesis. Enriched in the adult head. Embryos contain both isoforms A and B, whereas later in development (heads and torsos) only isoform B is detected.

The protein localises to the nucleus. May participate in a function common to the expression of most genes transcribed by RNA polymerase II. The chain is RNA-binding protein cabeza (caz) from Drosophila melanogaster (Fruit fly).